We begin with the raw amino-acid sequence, 319 residues long: Acetyl-coenzyme A carboxylase carboxyl transferase subunit alpha (319 aa).

In terms of domain architecture, CoA carboxyltransferase C-terminal spans 39–293; the sequence is KLEKKVDRMR…HEAIARQLKE (255 aa).

The protein belongs to the AccA family. Acetyl-CoA carboxylase is a heterohexamer composed of biotin carboxyl carrier protein (AccB), biotin carboxylase (AccC) and two subunits each of ACCase subunit alpha (AccA) and ACCase subunit beta (AccD).

The protein resides in the cytoplasm. The enzyme catalyses N(6)-carboxybiotinyl-L-lysyl-[protein] + acetyl-CoA = N(6)-biotinyl-L-lysyl-[protein] + malonyl-CoA. Its pathway is lipid metabolism; malonyl-CoA biosynthesis; malonyl-CoA from acetyl-CoA: step 1/1. Its function is as follows. Component of the acetyl coenzyme A carboxylase (ACC) complex. First, biotin carboxylase catalyzes the carboxylation of biotin on its carrier protein (BCCP) and then the CO(2) group is transferred by the carboxyltransferase to acetyl-CoA to form malonyl-CoA. This Geobacter sulfurreducens (strain ATCC 51573 / DSM 12127 / PCA) protein is Acetyl-coenzyme A carboxylase carboxyl transferase subunit alpha.